Consider the following 85-residue polypeptide: Beta-insect depressant toxin Lqh-dprIT3e (85 aa).

The N-terminal stretch at 1-21 (MKLLLLLTISASMLIEGLVNA) is a signal peptide. Positions 22-82 (DGYIRGGDGC…EWDYETDTCG (61 aa)) constitute an LCN-type CS-alpha/beta domain. Intrachain disulfides connect cysteine 31-cysteine 81, cysteine 35-cysteine 56, cysteine 42-cysteine 63, and cysteine 46-cysteine 65. Glycine 82 is modified (glycine amide).

Belongs to the long (4 C-C) scorpion toxin superfamily. Sodium channel inhibitor family. Beta subfamily. In terms of tissue distribution, expressed by the venom gland.

Its subcellular location is the secreted. Functionally, depressant insect beta-toxins cause a transient contraction paralysis followed by a slow flaccid paralysis. They bind voltage-independently at site-4 of sodium channels (Nav) and block action potentials, primarily by depolarizing the axonal membrane and suppressing the sodium current. This depressant toxin is active only on insects. It is found in a relatively small amount in the venom. This is Beta-insect depressant toxin Lqh-dprIT3e from Leiurus hebraeus (Hebrew deathstalker scorpion).